Reading from the N-terminus, the 392-residue chain is Adenosine 3'-phospho 5'-phosphosulfate transporter 2 (392 aa).

Positions 11 to 35 (NINGSASGQQAPTSNSPTLTRKSSS) are disordered. Transmembrane regions (helical) follow at residues 62 to 82 (CAGVFILYILYGYLQELIFTV), 87 to 107 (PFGWFLTLVQFGYYIGFGLVE), 136 to 156 (LVLAALTLGTMGLSNSSLGYL), 159 to 179 (PTQVIFKCCKLIPVLVGSILI), 185 to 205 (GPLDFAAASCMCIGLAWFTLA), 212 to 232 (NFNLLGVAMISGALLCDAAIG), 249 to 269 (VVFYSYGLGFVYLFVIMLVTG), 286 to 306 (FGYGFLFSLSGYLGIQFVLAL), 314 to 334 (IAATVTTARKAVTIAFSFVLF), and 338 to 358 (FTVQYLWSGLIVVLGIYLNVY).

The protein belongs to the nucleotide-sugar transporter family. SLC35B subfamily.

It is found in the golgi apparatus membrane. Its function is as follows. Mediates the transport of adenosine 3'-phospho 5'-phosphosulfate (PAPS), from cytosol into Golgi. PAPS is a universal sulfuryl donor for sulfation events that take place in the Golgi. Essential for viability. Involved in glycosaminoglycan synthesis and the subsequent signaling. May be involved in hh and dpp signaling by controlling the sulfation of heparan sulfate (HS). In Drosophila pseudoobscura pseudoobscura (Fruit fly), this protein is Adenosine 3'-phospho 5'-phosphosulfate transporter 2.